A 401-amino-acid polypeptide reads, in one-letter code: Voltage-gated potassium channel subunit beta-1 (401 aa).

4 residues coordinate NADP(+): threonine 90, tryptophan 91, glutamine 97, and aspartate 119. Tyrosine 124 serves as the catalytic Proton donor/acceptor. Asparagine 192, serine 222, arginine 223, glutamine 248, tryptophan 277, serine 278, proline 279, leucine 280, alanine 281, cysteine 282, lysine 288, arginine 298, glycine 357, serine 359, glutamine 363, glutamate 366, and asparagine 367 together coordinate NADP(+).

The protein belongs to the shaker potassium channel beta subunit family. As to quaternary structure, homotetramer. Interaction with tetrameric potassium channel alpha subunits gives rise to a heterooctamer. Identified in potassium channel complexes containing KCNA1, KCNA2, KCNA4, KCNA5, KCNA6, KCNAB1 and KCNAB2. Part of a complex containing KCNA1, KCNA4 and LGI1; interaction with LGI1 inhibits down-regulation of KCNA1 channel activity. Interacts with the dimer formed by GNB1 and GNG2; this enhances KCNA1 binding. Interacts with SQSTM1.

It localises to the cytoplasm. Its subcellular location is the membrane. The protein localises to the cell membrane. The enzyme catalyses a primary alcohol + NADP(+) = an aldehyde + NADPH + H(+). The catalysed reaction is a secondary alcohol + NADP(+) = a ketone + NADPH + H(+). Regulatory subunit of the voltage-gated potassium (Kv) channels composed of pore-forming and potassium-conducting alpha subunits and of regulatory beta subunits. The beta-1/KCNAB1 cytoplasmic subunit mediates closure of delayed rectifier potassium channels by physically obstructing the pore via its N-terminal domain and increases the speed of channel closure for other family members. Promotes the inactivation of KCNA1, KCNA2, KCNA4, KCNA5 and KCNA6 alpha subunit-containing channels. Displays nicotinamide adenine dinucleotide phosphate (NADPH)-dependent aldoketoreductase activity by catalyzing the NADPH-dependent reduction of a variety of endogenous aldehydes and ketones. The binding of NADPH is required for efficient down-regulation of potassium channel activity. Oxidation of the bound NADPH restrains N-terminal domain from blocking the channel, thereby decreasing N-type inactivation of potassium channel activity. The sequence is that of Voltage-gated potassium channel subunit beta-1 (KCNAB1) from Bos taurus (Bovine).